A 105-amino-acid polypeptide reads, in one-letter code: Endoribonuclease MazF1 (105 aa).

It belongs to the PemK/MazF family. Forms a complex with cognate antitoxin MazE1.

Toxic component of a type II toxin-antitoxin (TA) system. Acts as an endoribonuclease on single-strand RNA, cleaving between the first and second bases in the sequence UCGCU. Neutralized by coexpression with cognate antitoxin MazE1. The chain is Endoribonuclease MazF1 (mazF1) from Mycobacterium bovis (strain ATCC BAA-935 / AF2122/97).